We begin with the raw amino-acid sequence, 495 residues long: Probable lysine-specific demethylase 4A (495 aa).

The JmjN domain occupies 18 to 60 (IMTFRPSYEEFQNFSAYIEYIESRGAHLAGLAKIQPPAEWVPR). Tyrosine 139 serves as a coordination point for 2-oxoglutarate. Positions 149–315 (DEDLDVWNIG…YGKRASICRC (167 aa)) constitute a JmjC domain. Fe cation-binding residues include histidine 195 and glutamate 197. 2 residues coordinate 2-oxoglutarate: asparagine 205 and lysine 213. Positions 241 and 247 each coordinate Zn(2+). Lysine 248 is a binding site for 2-oxoglutarate. Residue histidine 283 coordinates Fe cation. Residues cysteine 313 and cysteine 315 each coordinate Zn(2+). At serine 409 the chain carries Phosphoserine.

It belongs to the JHDM3 histone demethylase family. Fe(2+) is required as a cofactor.

The protein resides in the nucleus. It catalyses the reaction N(6),N(6),N(6)-trimethyl-L-lysyl(9)-[histone H3] + 2 2-oxoglutarate + 2 O2 = N(6)-methyl-L-lysyl(9)-[histone H3] + 2 formaldehyde + 2 succinate + 2 CO2. The enzyme catalyses N(6),N(6),N(6)-trimethyl-L-lysyl(36)-[histone H3] + 2 2-oxoglutarate + 2 O2 = N(6)-methyl-L-lysyl(36)-[histone H3] + 2 formaldehyde + 2 succinate + 2 CO2. In terms of biological role, probable histone demethylase that specifically demethylates 'Lys-9' and 'Lys-36' residues of histone H3, thereby playing a central role in histone code. Demethylation of Lys residue generates formaldehyde and succinate. The protein is Probable lysine-specific demethylase 4A (Kdm4A) of Drosophila melanogaster (Fruit fly).